The chain runs to 197 residues: Nascent polypeptide-associated complex subunit alpha (197 aa).

Residues 1–18 (MTGSTETRHNEKDVKEPQ) are compositionally biased toward basic and acidic residues. The segment at 1–30 (MTGSTETRHNEKDVKEPQVDSDADSDNEAI) is disordered. Residues 19–28 (VDSDADSDNE) are compositionally biased toward acidic residues. The 66-residue stretch at 58–123 (SRSEKKARKL…AKIEDLTQHA (66 aa)) folds into the NAC-A/B domain. The tract at residues 134–155 (TREAPQLKTVEEDDNEDVEEDS) is disordered. Positions 144 to 155 (EEDDNEDVEEDS) are enriched in acidic residues. One can recognise a UBA domain in the interval 158-195 (IEEKDIELVISQANTTRNKAIRALKDADNDIVNAIMSL).

The protein belongs to the NAC-alpha family.

In terms of biological role, may promote appropriate targeting of ribosome-nascent polypeptide complexes. This chain is Nascent polypeptide-associated complex subunit alpha, found in Caenorhabditis briggsae.